We begin with the raw amino-acid sequence, 983 residues long: Anion exchange protein 4 (983 aa).

The tract at residues 1–48 (MEMKLPGQEGFEASSAPRNIPSGELDSNPDPGTGPSPDGPSDTESKEL) is disordered. A glycan (N-linked (GlcNAc...) asparagine) is linked at Asn-183. Disordered stretches follow at residues 186–205 (TGTR…DNEE) and 332–357 (RIPP…RGPA). Helical transmembrane passes span 415–435 (AVLY…GLLG), 443–463 (GVLE…LMAG), 500–520 (VGIW…SVLV), and 530–550 (GFCA…MLNL). Residues 415–983 (AVLYIYLATV…KAPEINISVN (569 aa)) are membrane (anion exchange). 2 N-linked (GlcNAc...) asparagine glycosylation sites follow: Asn-576 and Asn-600. The next 7 membrane-spanning stretches (helical) occupy residues 624–644 (VPDI…FAMA), 665–685 (FSSV…GLAT), 712–732 (PWWW…LIFM), 758–778 (LFCV…WYVS), 815–835 (GLVV…LKFI), 837–857 (MPVL…SIQF), and 899–919 (LWII…LGLV). Residues 946–957 (RSIPEKGLEPEH) show a composition bias toward basic and acidic residues. Residues 946–983 (RSIPEKGLEPEHSFSGSDSEDSELMYQPKAPEINISVN) form a disordered region. Asn-979 carries N-linked (GlcNAc...) asparagine glycosylation.

The protein belongs to the anion exchanger (TC 2.A.31) family. In terms of tissue distribution, kidney specific.

Its subcellular location is the basolateral cell membrane. It carries out the reaction 2 hydrogencarbonate(out) + chloride(in) + Na(+)(out) = 2 hydrogencarbonate(in) + chloride(out) + Na(+)(in). It catalyses the reaction K(+)(in) + 2 hydrogencarbonate(in) + chloride(out) = K(+)(out) + 2 hydrogencarbonate(out) + chloride(in). The catalysed reaction is Li(+)(in) + 2 hydrogencarbonate(in) + chloride(out) = Li(+)(out) + 2 hydrogencarbonate(out) + chloride(in). The enzyme catalyses Rb(+)(in) + 2 hydrogencarbonate(in) + chloride(out) = Rb(+)(out) + 2 hydrogencarbonate(out) + chloride(in). It carries out the reaction Cs(+)(in) + 2 hydrogencarbonate(in) + chloride(out) = Cs(+)(out) + 2 hydrogencarbonate(out) + chloride(in). In terms of biological role, electroneutral Cl(-)/HCO3(-) antiporter that favors chloride ion entry and efflux of hydrogencarbonate and sodium ion across the basolateral membrane and may participate in salivary secretion. Also mediates Cl(-)/HCO3(-) exchange activity in the presence of K(+) as well as Cs(+), Li(+), and Rb(+). Does not contribute to Cl(-)/HCO3(-) exchanger in the apical membrane of the upper villous epithelium. This Homo sapiens (Human) protein is Anion exchange protein 4.